Reading from the N-terminus, the 695-residue chain is NADPH--cytochrome P450 reductase (695 aa).

At 1–8 (MAQLDTLD) the chain is on the lumenal side. The chain crosses the membrane as a helical span at residues 9–31 (LVVLAVLLVGSVAYFTKGTYWAV). The Cytoplasmic segment spans residues 32–695 (AKDPYASTGP…SGSYQEDVWS (664 aa)). Positions 66 to 221 (CVIFYGSQTG…DFLAWKEPMW (156 aa)) constitute a Flavodoxin-like domain. Residues 72–77 (SQTGTA), 123–126 (ATYG), 169–178 (LGNNTYEHYN), and D204 contribute to the FMN site. One can recognise an FAD-binding FR-type domain in the interval 277-538 (HNPFIAPIAE…HVRHSNFKLP (262 aa)). R296 contributes to the NADP(+) binding site. Residues 451-454 (RYYS), 469-471 (TAV), and 486-489 (GVTT) each bind FAD. NADP(+) is bound by residues T552, 614–615 (SR), 620–624 (KVYVQ), and E656. An FAD-binding site is contributed by W694.

It belongs to the NADPH--cytochrome P450 reductase family. This sequence in the N-terminal section; belongs to the flavodoxin family. In the C-terminal section; belongs to the flavoprotein pyridine nucleotide cytochrome reductase family. The cofactor is FAD. FMN is required as a cofactor.

The protein localises to the endoplasmic reticulum membrane. The protein resides in the mitochondrion outer membrane. It is found in the cell membrane. It catalyses the reaction 2 oxidized [cytochrome P450] + NADPH = 2 reduced [cytochrome P450] + NADP(+) + H(+). This enzyme is required for electron transfer from NADP to cytochrome P450 in microsomes. It can also provide electron transfer to heme oxygenase and cytochrome B5. Involved in ergosterol biosynthesis. The polypeptide is NADPH--cytochrome P450 reductase (Aspergillus niger (strain ATCC MYA-4892 / CBS 513.88 / FGSC A1513)).